The primary structure comprises 45 residues: uncharacterized protein (45 aa).

The chain crosses the membrane as a helical span at residues 10 to 27 (LLYFVLFVDIYGIFTNNI).

It localises to the membrane. This is an uncharacterized protein from Dictyostelium discoideum (Social amoeba).